Consider the following 574-residue polypeptide: Galactose transporter (574 aa).

The disordered stretch occupies residues 1-57; sequence MAVEENNMPVVSQQPQAGEDVISSLSKDSHLSAQSQKYSNDELKAGESGSEGSQSVP. The Cytoplasmic segment spans residues 1-70; it reads MAVEENNMPV…PKKPMSEYVT (70 aa). Polar residues predominate over residues 23–38; it reads SSLSKDSHLSAQSQKY. A phosphoserine mark is found at serine 32, serine 35, serine 39, serine 48, serine 50, serine 53, and serine 55. A helical membrane pass occupies residues 71–91; that stretch reads VSLLCLCVAFGGFMFGWDTGT. Residues 92 to 121 lie on the Extracellular side of the membrane; the sequence is ISGFVVQTDFLRRFGMKHKDGTHYLSNVRT. Residues 122–142 traverse the membrane as a helical segment; the sequence is GLIVAIFNIGCAFGGIILSKG. Over 143–149 the chain is Cytoplasmic; the sequence is GDMYGRK. Residues 150-170 form a helical membrane-spanning segment; the sequence is KGLSIVVSVYIVGIIIQIASI. At 171–175 the chain is on the extracellular side; that stretch reads NKWYQ. The helical transmembrane segment at 176–196 threads the bilayer; the sequence is YFIGRIISGLGVGGIAVLCPM. Residues 197–207 lie on the Cytoplasmic side of the membrane; it reads LISEIAPKHLR. A helical membrane pass occupies residues 208–228; it reads GTLVSCYQLMITAGIFLGYCT. At 229–242 the chain is on the extracellular side; it reads NYGTKSYSNSVQWR. A helical membrane pass occupies residues 243–263; that stretch reads VPLGLCFAWSLFMIGALTLVP. Residues 264–342 are Cytoplasmic-facing; it reads ESPRYLCEVN…MGVFVQMFQQ (79 aa). A helical membrane pass occupies residues 343–362; sequence LTGNNYFFYYGTVIFKSVGL. Over 363 to 366 the chain is Extracellular; sequence DDSF. The chain crosses the membrane as a helical span at residues 367 to 387; it reads ETSIVIGVVNFASTFFSLWTV. At 388–394 the chain is on the cytoplasmic side; sequence ENLGHRK. Residues 395-415 traverse the membrane as a helical segment; sequence CLLLGAATMMACMVIYASVGV. Over 416–435 the chain is Extracellular; that stretch reads TRLYPHGKSQPSSKGAGNCM. Residues 436-456 form a helical membrane-spanning segment; that stretch reads IVFTCFYIFCYATTWAPVAWV. Residues 457–472 lie on the Cytoplasmic side of the membrane; it reads ITAESFPLRVKSKCMA. The chain crosses the membrane as a helical span at residues 473 to 493; the sequence is LASASNWVWGFLIAFFTPFIT. At 494–499 the chain is on the extracellular side; sequence SAINFY. The chain crosses the membrane as a helical span at residues 500–520; the sequence is YGYVFMGCLVAMFFYVFFFVP. Over 521–574 the chain is Cytoplasmic; it reads ETKGLSLEEIQELWEEGVLPWKSEGWIPSSRRGNNYDLEDLQHDDKPWYKAMLE.

This sequence belongs to the major facilitator superfamily. Sugar transporter (TC 2.A.1.1) family.

The protein resides in the membrane. In terms of biological role, GAL2 is a facilitated diffusion transporter required for both the high-affinity galactokinase-dependent and low-affinity galactokinase-independent galactose transport processes. This is Galactose transporter (GAL2) from Saccharomyces cerevisiae (strain ATCC 204508 / S288c) (Baker's yeast).